Here is a 239-residue protein sequence, read N- to C-terminus: MKVIVTENKIQGGAKAFEIFKNEIKNGAKVLGLATGSTPETLYQNFINSDLNCSNLISINLDEYVGLTPDNPQSYHYFMRKHLFDKKPFKKSYVPDGMTKDVAATCKEYDQIIKDNPIDVQLLGIGRNGHIAFNEPGTPFDIGTHEVKLTENTIKANSRFFDNEDEVPKSAICMGTANIMDAKKVVLMAFGEKKAQAIKEMIEGPVTEQVPASILQKHPDVTVIVDKAAAQELDDKYKN.

Residue D62 is the Proton acceptor; for enolization step of the active site. N128 functions as the For ring-opening step in the catalytic mechanism. H130 functions as the Proton acceptor; for ring-opening step in the catalytic mechanism. E135 functions as the For ring-opening step in the catalytic mechanism.

The protein belongs to the glucosamine/galactosamine-6-phosphate isomerase family. NagB subfamily.

The catalysed reaction is alpha-D-glucosamine 6-phosphate + H2O = beta-D-fructose 6-phosphate + NH4(+). It participates in amino-sugar metabolism; N-acetylneuraminate degradation; D-fructose 6-phosphate from N-acetylneuraminate: step 5/5. Functionally, catalyzes the reversible isomerization-deamination of glucosamine 6-phosphate (GlcN6P) to form fructose 6-phosphate (Fru6P) and ammonium ion. The protein is Glucosamine-6-phosphate deaminase of Lactobacillus helveticus (strain DPC 4571).